A 393-amino-acid polypeptide reads, in one-letter code: 4-O-methyl-glucuronoyl methylesterase (393 aa).

The N-terminal stretch at 1–19 (MKLSAALLAIAAFANVASA) is a signal peptide. Pyrrolidone carboxylic acid is present on Gln20. Residues Cys22 and Cys56 are joined by a disulfide bond. Asn103 and Asn168 each carry an N-linked (GlcNAc...) asparagine glycan. The short motif at 203-208 (GCSRNG) is the GXSYXG catalytic site motif element. Disulfide bonds link Cys204-Cys340 and Cys236-Cys312. Ser205 (nucleophile) is an active-site residue. Substrate-binding residues include Lys209, Gln251, Glu259, and Trp303. The active-site Proton donor/acceptor is His339.

The protein belongs to the carbohydrate esterase 15 (CE15) family.

The protein resides in the secreted. It carries out the reaction a 4-O-methyl-alpha-D-glucuronosyl ester derivative + H2O = 4-O-methyl-alpha-D-glucuronate derivative + an alcohol + H(+). Glucuronoyl esterase which may play a significant role in biomass degradation, as it is considered to disconnect hemicellulose from lignin through the hydrolysis of the ester bond between 4-O-methyl-D-glucuronic acid residues of glucuronoxylans and aromatic alcohols of lignin. This chain is 4-O-methyl-glucuronoyl methylesterase, found in Schizophyllum commune (strain H4-8 / FGSC 9210) (Split gill fungus).